A 776-amino-acid polypeptide reads, in one-letter code: Rho guanine nucleotide exchange factor 6 (776 aa).

In terms of domain architecture, Calponin-homology (CH) spans 1–111 (MNPEEQIVTW…TLLAVNKATE (111 aa)). Positions 115-151 (SERPCGRSSSLSAANTSQTNPQGAVSSTVSGLQRQSK) are disordered. A compositionally biased stretch (polar residues) spans 121–151 (RSSSLSAANTSQTNPQGAVSSTVSGLQRQSK). Phosphoserine is present on serine 126. A Phosphothreonine modification is found at threonine 133. Serine 144 and serine 150 each carry phosphoserine. The SH3 domain occupies 160-219 (SHQLIVKARFNFKQTNEDELSVCKGDIIYVTRVEEGGWWEGTLNGRTGWFPSNYVREIKS). Serine 225 is modified (phosphoserine). A DH domain is found at 241–421 (YYTVVLQNIL…KTLMGQCQDL (181 aa)). Residues 443 to 548 (DIKNLGNVIF…WLEQLNRLIR (106 aa)) enclose the PH domain. Serine 488 carries the phosphoserine modification. Residues 561 to 572 (SSSCSAHSSFSS) show a composition bias toward low complexity. The tract at residues 561 to 581 (SSSCSAHSSFSSTGQPRGPLE) is disordered. Phosphoserine occurs at positions 640 and 684.

As to quaternary structure, interacts with PAK kinases through the SH3 domain. Interacts with GIT1. Component of cytoplasmic complexes, which also contain PXN, GIT1 and PAK1. Interacts with PARVB. Interacts with BIN2. Identified in a complex with BIN2 and GIT2. Interacts with PARVG; the guanine nucleotide exchange factor activity of ARHGEF6 is essential for PARVG-induced enhancement of cell spreading. In terms of tissue distribution, ubiquitous.

The protein localises to the cell projection. The protein resides in the lamellipodium. In terms of biological role, acts as a RAC1 guanine nucleotide exchange factor (GEF). The chain is Rho guanine nucleotide exchange factor 6 (ARHGEF6) from Homo sapiens (Human).